We begin with the raw amino-acid sequence, 509 residues long: 2,3-bisphosphoglycerate-independent phosphoglycerate mutase (509 aa).

Asp11 is a binding site for Mn(2+). Residue Tyr35 is modified to Phosphotyrosine. Ser61 is a binding site for Mn(2+). Catalysis depends on Ser61, which acts as the Phosphoserine intermediate. Substrate contacts are provided by residues His122, Arg152–Asp153, Arg184, Arg190, Arg260–Arg263, and Lys335. Mn(2+) is bound by residues Asp402, His406, Asp443, His444, and His461.

It belongs to the BPG-independent phosphoglycerate mutase family. In terms of assembly, monomer. Mn(2+) is required as a cofactor.

The enzyme catalyses (2R)-2-phosphoglycerate = (2R)-3-phosphoglycerate. It participates in carbohydrate degradation; glycolysis; pyruvate from D-glyceraldehyde 3-phosphate: step 3/5. Essential for rapid growth and for sporulation. Catalyzes the interconversion of 2-phosphoglycerate and 3-phosphoglycerate. The protein is 2,3-bisphosphoglycerate-independent phosphoglycerate mutase of Bacillus anthracis.